A 130-amino-acid polypeptide reads, in one-letter code: Protein NrdI (130 aa).

It belongs to the NrdI family.

Its function is as follows. Probably involved in ribonucleotide reductase function. The chain is Protein NrdI from Bartonella bacilliformis (strain ATCC 35685 / KC583 / Herrer 020/F12,63).